The chain runs to 213 residues: Virulence factor 1 (213 aa).

It is found in the host mitochondrion. Functionally, plays a role in antagonizing the host innate immune response. This is Virulence factor 1 from Norovirus (isolate Mouse/NoV/United States/MNV1/2002/GV) (MNV-1).